Reading from the N-terminus, the 434-residue chain is Nicotinate phosphoribosyltransferase (434 aa).

A Phosphohistidine; by autocatalysis modification is found at H242.

It belongs to the NAPRTase family. Post-translationally, transiently phosphorylated on a His residue during the reaction cycle. Phosphorylation strongly increases the affinity for substrates and increases the rate of nicotinate D-ribonucleotide production. Dephosphorylation regenerates the low-affinity form of the enzyme, leading to product release.

It catalyses the reaction nicotinate + 5-phospho-alpha-D-ribose 1-diphosphate + ATP + H2O = nicotinate beta-D-ribonucleotide + ADP + phosphate + diphosphate. It functions in the pathway cofactor biosynthesis; NAD(+) biosynthesis; nicotinate D-ribonucleotide from nicotinate: step 1/1. Its function is as follows. Catalyzes the synthesis of beta-nicotinate D-ribonucleotide from nicotinate and 5-phospho-D-ribose 1-phosphate at the expense of ATP. The polypeptide is Nicotinate phosphoribosyltransferase (Rhizobium leguminosarum bv. trifolii (strain WSM2304)).